Here is a 128-residue protein sequence, read N- to C-terminus: Con-Ins F2c (128 aa).

The signal sequence occupies residues 1 to 24; it reads MTTSSYFLLVALGLLLYVCRSSFG. 4 cysteine pairs are disulfide-bonded: C29–C104, C41–C107, C53–C120, and C106–C111. Positions 59–89 are cleaved as a propeptide — c peptide; it reads LQGGTGKKRGRASLLRKRRAFLSMLKARAKR. E115 is modified (4-carboxyglutamate; partial). Position 127 is a serine amide (S127).

Belongs to the insulin family. As to quaternary structure, heterodimer of A and B chains; disulfide-linked. In terms of tissue distribution, expressed by the venom gland.

It localises to the secreted. Functionally, this venom insulin facilitates prey capture by rapidly inducing hypoglycemic shock. Intraperitoneal injection of this peptide into zebrafish lowers blood glucose with the same potency than human insulin. In vivo, when applied to water, this peptide reduces overall locomotor activity of zebrafish larvae, observed as a significant decrease in the percentage of time spent swimming and movement frequency. This Conus floridulus (Cone snail) protein is Con-Ins F2c.